The primary structure comprises 192 residues: uncharacterized protein (192 aa).

2 disordered regions span residues 1–37 (MASS…PAFP) and 146–192 (ARGP…EQNK). Composition is skewed to pro residues over residues 8–19 (TPSPAGLPPPSV) and 159–180 (APPP…PGWP).

This is an uncharacterized protein from Homo sapiens (Human).